We begin with the raw amino-acid sequence, 310 residues long: Protein BIG GRAIN 1 (310 aa).

Residues 81-141 form a disordered region; it reads RAPGPHATTS…KKAKKPGASI (61 aa). Positions 90–106 are enriched in low complexity; that stretch reads SSSSECSSYGGFSSSEA.

This sequence belongs to the BIG GRAIN 1 (BG1) plant protein family.

It localises to the cell membrane. In terms of biological role, involved in auxin transport. Positive regulator of the auxin signaling pathway involved in gravitropism, plant growth and grain development. The sequence is that of Protein BIG GRAIN 1 from Oryza sativa subsp. indica (Rice).